Reading from the N-terminus, the 210-residue chain is Small ribosomal subunit protein uS3 (210 aa).

The 69-residue stretch at 38 to 106 folds into the KH type-2 domain; sequence IRAFLKKRLY…EIFINIIEVR (69 aa).

The protein belongs to the universal ribosomal protein uS3 family. In terms of assembly, part of the 30S ribosomal subunit. Forms a tight complex with proteins S10 and S14.

Binds the lower part of the 30S subunit head. Binds mRNA in the 70S ribosome, positioning it for translation. The sequence is that of Small ribosomal subunit protein uS3 from Pelobacter propionicus (strain DSM 2379 / NBRC 103807 / OttBd1).